A 199-amino-acid chain; its full sequence is Protein GrpE (199 aa).

Positions 1 to 10 (MTNQTEKEQV) are enriched in basic and acidic residues. The tract at residues 1–44 (MTNQTEKEQVEQDVSQATELAQEAQEAQTQDVEPELQQNNEIDP) is disordered. Low complexity predominate over residues 16–30 (QATELAQEAQEAQTQ).

This sequence belongs to the GrpE family. As to quaternary structure, homodimer.

The protein resides in the cytoplasm. Functionally, participates actively in the response to hyperosmotic and heat shock by preventing the aggregation of stress-denatured proteins, in association with DnaK and GrpE. It is the nucleotide exchange factor for DnaK and may function as a thermosensor. Unfolded proteins bind initially to DnaJ; upon interaction with the DnaJ-bound protein, DnaK hydrolyzes its bound ATP, resulting in the formation of a stable complex. GrpE releases ADP from DnaK; ATP binding to DnaK triggers the release of the substrate protein, thus completing the reaction cycle. Several rounds of ATP-dependent interactions between DnaJ, DnaK and GrpE are required for fully efficient folding. This chain is Protein GrpE, found in Glaesserella parasuis serovar 5 (strain SH0165) (Haemophilus parasuis).